Consider the following 369-residue polypeptide: Carbamoyl phosphate synthase small chain (369 aa).

Positions 1 to 168 (MYGILVLEDG…KKVVKYPAKD (168 aa)) are CPSase. Residues serine 45, glycine 220, and glycine 222 each coordinate L-glutamine. In terms of domain architecture, Glutamine amidotransferase type-1 spans 172-364 (SCVVIDCGVK…VALGMKFKQE (193 aa)). Catalysis depends on cysteine 247, which acts as the Nucleophile. L-glutamine is bound by residues leucine 248, glutamine 251, asparagine 289, glycine 291, and phenylalanine 292. Catalysis depends on residues histidine 337 and glutamate 339.

This sequence belongs to the CarA family. Composed of two chains; the small (or glutamine) chain promotes the hydrolysis of glutamine to ammonia, which is used by the large (or ammonia) chain to synthesize carbamoyl phosphate. Tetramer of heterodimers (alpha,beta)4.

It catalyses the reaction hydrogencarbonate + L-glutamine + 2 ATP + H2O = carbamoyl phosphate + L-glutamate + 2 ADP + phosphate + 2 H(+). It carries out the reaction L-glutamine + H2O = L-glutamate + NH4(+). Its pathway is amino-acid biosynthesis; L-arginine biosynthesis; carbamoyl phosphate from bicarbonate: step 1/1. It participates in pyrimidine metabolism; UMP biosynthesis via de novo pathway; (S)-dihydroorotate from bicarbonate: step 1/3. Small subunit of the glutamine-dependent carbamoyl phosphate synthetase (CPSase). CPSase catalyzes the formation of carbamoyl phosphate from the ammonia moiety of glutamine, carbonate, and phosphate donated by ATP, constituting the first step of 2 biosynthetic pathways, one leading to arginine and/or urea and the other to pyrimidine nucleotides. The small subunit (glutamine amidotransferase) binds and cleaves glutamine to supply the large subunit with the substrate ammonia. This chain is Carbamoyl phosphate synthase small chain, found in Methanococcus vannielii (strain ATCC 35089 / DSM 1224 / JCM 13029 / OCM 148 / SB).